A 697-amino-acid polypeptide reads, in one-letter code: CENP-A multicopy suppressor protein 2 (697 aa).

The GATA-type; atypical zinc finger occupies 351 to 378 (CQNCGTIKTANWRNATYMNITLMLCNAC). The disordered stretch occupies residues 443-484 (PLNRLTSLDSTHSAPDPNHISKPSVVNQQKSRGGPRTAKLKN). The segment covering 445 to 455 (NRLTSLDSTHS) has biased composition (polar residues).

Interacts with CENP-A.

The protein localises to the nucleus. The protein resides in the chromosome. Its subcellular location is the centromere. In terms of biological role, required for proper chromosome segregation via regulation of CENP-A localization to the centromere. This is CENP-A multicopy suppressor protein 2 (ams2) from Schizosaccharomyces pombe (strain 972 / ATCC 24843) (Fission yeast).